The following is a 123-amino-acid chain: uncharacterized protein (123 aa).

The disordered stretch occupies residues 76–97 (ENNKRKKKSEGERVRSPRTFRG).

This is an uncharacterized protein from Saccharomyces cerevisiae (strain ATCC 204508 / S288c) (Baker's yeast).